The sequence spans 957 residues: Dystrophin-related protein 2 (957 aa).

Spectrin repeat units follow at residues 102–179 (DLSG…EELE) and 231–337 (EHLL…QLQD). A WW domain is found at 358–383 (WERAISPNKVPYYINHQAQTTCWDHP). Residues 605–661 (KHQTKCSICRQCPIKGFRYRSLKQFNVDICQTCFLTGRASKGNKLHYPIMEYYTPTT) form a ZZ-type; degenerate zinc finger. Zn(2+)-binding residues include cysteine 610, cysteine 613, cysteine 634, and cysteine 637. Serine 748 bears the Phosphoserine mark. The span at 876 to 894 (QPPSESDGNGSAGSSLASS) shows a compositional bias: low complexity. Residues 876 to 923 (QPPSESDGNGSAGSSLASSPRQSEGSHPREKGQTTPDTEVADDVGSKS) are disordered. Residue threonine 910 is modified to Phosphothreonine.

In terms of assembly, interacts with PRX; this enhances phosphorylation. Identified in a dystroglycan complex that contains at least PRX, DRP2, UTRN, DMD and DAG1. Detected in quadriceps nerve Schwann cells. Detected in sciatic nerve. Detected in trigeminal nerve Schwann cells (at protein level). Detected in brain and spinal cord.

It is found in the postsynaptic density. The protein resides in the cell projection. The protein localises to the dendrite. Its subcellular location is the perikaryon. It localises to the cell membrane. Its function is as follows. Required for normal myelination and for normal organization of the cytoplasm and the formation of Cajal bands in myelinating Schwann cells. Required for normal PRX location at appositions between the abaxonal surface of the myelin sheath and the Schwann cell plasma membrane. Possibly involved in membrane-cytoskeleton interactions of the central nervous system. The protein is Dystrophin-related protein 2 (Drp2) of Mus musculus (Mouse).